A 110-amino-acid polypeptide reads, in one-letter code: Inner kinetochore subunit mhf1 (110 aa).

The protein belongs to the TAF9 family. CENP-S/MHF1 subfamily. The MHF histone-fold complex is a heterotetramer of 2 mhf1-mhf2 heterodimers. Component of the inner kinetochore constitutive centromere-associated network (CCAN) (also known as central kinetochore Sim4 complex in fission yeast), which is composed of at least cnl2, cnp3, cnp20, fta1, fta2, fta3, fta4, fta6, fta7, mal2, mhf1, mhf2, mis6, mis15, mis17, sim4 and wip1.

The protein resides in the nucleus. Component of a FANCM-MHF complex that promotes gene conversion at blocked replication forks, probably by reversal of the stalled fork. FANCM-MHF promotes non-crossover recombination. This Schizosaccharomyces pombe (strain 972 / ATCC 24843) (Fission yeast) protein is Inner kinetochore subunit mhf1.